The following is a 270-amino-acid chain: MLGLEKKLTLYGFNNLTKTLSFNIYDVCYAKSEKAQKAYIEYIDEQYNSERLTKILCDVTEMIGAHVLNISKQDYEPQGASVNILITEEALPLHLIDESCNKGEGIAAQRDTIHAHLDKSHVTVHTYPEYHPDNAISTFRVDIDVSTCGMISPLNALDYLIGSFDSDIITIDYRVRGFTRDVEGKKFYIDHNITSIQDYIDDETLKKYDAIDVNVYQSNIFHTKMLIKEIELQNYLFNKDVNELLPKQRLEITNNLRKEMIEIFSGMNIY.

Residue S120 is the Schiff-base intermediate with substrate; via pyruvic acid of the active site. Position 120 is a pyruvic acid (Ser); by autocatalysis (S120). H125 acts as the Proton acceptor; for processing activity in catalysis. C148 functions as the Proton donor; for catalytic activity in the catalytic mechanism.

The protein belongs to the prokaryotic AdoMetDC family. Type 2 subfamily. Heterooctamer of four alpha and four beta chains arranged as a tetramer of alpha/beta heterodimers. It depends on pyruvate as a cofactor. Is synthesized initially as an inactive proenzyme. Formation of the active enzyme involves a self-maturation process in which the active site pyruvoyl group is generated from an internal serine residue via an autocatalytic post-translational modification. Two non-identical subunits are generated from the proenzyme in this reaction, and the pyruvate is formed at the N-terminus of the alpha chain, which is derived from the carboxyl end of the proenzyme. The post-translation cleavage follows an unusual pathway, termed non-hydrolytic serinolysis, in which the side chain hydroxyl group of the serine supplies its oxygen atom to form the C-terminus of the beta chain, while the remainder of the serine residue undergoes an oxidative deamination to produce ammonia and the pyruvoyl group blocking the N-terminus of the alpha chain.

The catalysed reaction is S-adenosyl-L-methionine + H(+) = S-adenosyl 3-(methylsulfanyl)propylamine + CO2. It participates in amine and polyamine biosynthesis; S-adenosylmethioninamine biosynthesis; S-adenosylmethioninamine from S-adenosyl-L-methionine: step 1/1. In terms of biological role, catalyzes the decarboxylation of S-adenosylmethionine to S-adenosylmethioninamine (dcAdoMet), the propylamine donor required for the synthesis of the polyamines spermine and spermidine from the diamine putrescine. The chain is S-adenosylmethionine decarboxylase proenzyme from Alkaliphilus oremlandii (strain OhILAs) (Clostridium oremlandii (strain OhILAs)).